Here is a 119-residue protein sequence, read N- to C-terminus: Immunoglobulin heavy variable 3-15 (119 aa).

Residues 1 to 19 (MEFGLSWIFLAAILKGVQC) form the signal peptide. Residues 20–44 (EVQLVESGGGLVKPGGSLRLSCAAS) form a framework-1 region. Positions 20 to 119 (EVQLVESGGG…EDTAVYYCTT (100 aa)) constitute an Ig-like domain. Cys-41 and Cys-117 form a disulfide bridge. A complementarity-determining-1 region spans residues 45-52 (GFTFSNAW). Positions 53–69 (MSWVRQAPGKGLEWVGR) are framework-2. Positions 70-79 (IKSKTDGGTT) are complementarity-determining-2. The interval 80–117 (DYAAPVKGRFTISRDDSKNTLYLQMNSLKTEDTAVYYC) is framework-3. The tract at residues 118–119 (TT) is complementarity-determining-3.

In terms of assembly, immunoglobulins are composed of two identical heavy chains and two identical light chains; disulfide-linked.

Its subcellular location is the secreted. It localises to the cell membrane. V region of the variable domain of immunoglobulin heavy chains that participates in the antigen recognition. Immunoglobulins, also known as antibodies, are membrane-bound or secreted glycoproteins produced by B lymphocytes. In the recognition phase of humoral immunity, the membrane-bound immunoglobulins serve as receptors which, upon binding of a specific antigen, trigger the clonal expansion and differentiation of B lymphocytes into immunoglobulins-secreting plasma cells. Secreted immunoglobulins mediate the effector phase of humoral immunity, which results in the elimination of bound antigens. The antigen binding site is formed by the variable domain of one heavy chain, together with that of its associated light chain. Thus, each immunoglobulin has two antigen binding sites with remarkable affinity for a particular antigen. The variable domains are assembled by a process called V-(D)-J rearrangement and can then be subjected to somatic hypermutations which, after exposure to antigen and selection, allow affinity maturation for a particular antigen. The protein is Immunoglobulin heavy variable 3-15 of Homo sapiens (Human).